Consider the following 361-residue polypeptide: Polygalacturonase (361 aa).

Positions 1-18 (MISANSLLISTLCAFAIA) are cleaved as a signal peptide. A disulfide bond links Cys-27 and Cys-43. PbH1 repeat units lie at residues 155–185 (CSDL…DVGS), 186–207 (SSNV…AVNS), 208–228 (GSTI…SVGS), 237–258 (VNGF…RIKT), and 266–288 (VTNV…VIEG). The Proton donor role is filled by Asp-200. Cys-202 and Cys-218 are oxidised to a cystine. Residue His-222 is part of the active site. Residues Asn-318 and Asn-330 are each glycosylated (N-linked (GlcNAc...) asparagine). Cysteines 350 and 361 form a disulfide.

This sequence belongs to the glycosyl hydrolase 28 family.

The catalysed reaction is (1,4-alpha-D-galacturonosyl)n+m + H2O = (1,4-alpha-D-galacturonosyl)n + (1,4-alpha-D-galacturonosyl)m.. The polypeptide is Polygalacturonase (PGU1) (Saccharomyces cerevisiae (strain ATCC 204508 / S288c) (Baker's yeast)).